Consider the following 2340-residue polypeptide: Proto-oncogene tyrosine-protein kinase ROS (2340 aa).

Positions 1 to 28 are cleaved as a signal peptide; that stretch reads MKNICWLTLKLVKFVVLGCIIWISVAQS. Topologically, residues 29-1854 are extracellular; the sequence is TVLSSCLTSC…EDGVWITETS (1826 aa). N-linked (GlcNAc...) asparagine glycosylation is present at asparagine 53. Fibronectin type-III domains are found at residues 111 to 206 and 207 to 295; these read LPTA…VPET and APLI…PSPS. N-linked (GlcNAc...) asparagine glycans are attached at residues asparagine 334 and asparagine 362. In terms of domain architecture, Fibronectin type-III 3 spans 567–667; it reads LPGHPQEVSV…APSVGTTLVP (101 aa). Residues asparagine 935 and asparagine 1011 are each glycosylated (N-linked (GlcNAc...) asparagine). Fibronectin type-III domains are found at residues 943 to 1038 and 1039 to 1146; these read IPDP…SVPS and APEN…TSEI. Asparagine 1243 is a glycosylation site (N-linked (GlcNAc...) asparagine). Fibronectin type-III domains follow at residues 1442 to 1549, 1550 to 1649, 1651 to 1744, and 1745 to 1846; these read ASDM…TKSG, VPGA…VNMF, TPEK…TKAG, and VPSK…LVED. Asparagine 1676 carries N-linked (GlcNAc...) asparagine glycosylation. The chain crosses the membrane as a helical span at residues 1855–1875; that stretch reads FILTIIVGIFLVATVPLTFVW. Residues 1876 to 2340 lie on the Cytoplasmic side of the membrane; that stretch reads HRSLKSHKAS…AHSEHGDVSE (465 aa). Residues 1938–2216 form the Protein kinase domain; that stretch reads LSLRLLLGSG…QLQLFRNVFL (279 aa). ATP contacts are provided by residues 1944-1952 and lysine 1973; that span reads LGSGAFGEV. Aspartate 2072 serves as the catalytic Proton acceptor. A phosphotyrosine; by autocatalysis mark is found at tyrosine 2267 and tyrosine 2327.

The protein belongs to the protein kinase superfamily. Tyr protein kinase family. Insulin receptor subfamily. In terms of assembly, interacts with PTPN11; may activate the PI3 kinase-mTOR signaling pathway. Interacts with VAV3; constitutive interaction mediating VAV3 phosphorylation. Interacts with PTPN6 (via SH2 1 domain); the interaction is direct and promotes ROS1 dephosphorylation. In terms of processing, phosphorylated. Probably autophosphorylates. Phosphorylation at Tyr-2267 and/or Tyr-2327 recruits PTPN11. Phosphorylation at Tyr-2267 is required for the interaction with PTPN6 that mediates ROS1 dephosphorylation. Phosphorylation at Tyr-2267 stimulates the kinase activity and the activation of the ERK1 signaling cascade. In terms of tissue distribution, expressed by epithelial cells of the caput epididymis (at protein level).

The protein localises to the cell membrane. The catalysed reaction is L-tyrosyl-[protein] + ATP = O-phospho-L-tyrosyl-[protein] + ADP + H(+). Its activity is regulated as follows. Inhibited by dephosphorylation by PTPN6. Its function is as follows. Receptor tyrosine kinase (RTK) that plays a role in epithelial cell differentiation and regionalization of the proximal epididymal epithelium. NELL2 is an endogenous ligand for ROS1. Upon endogenous stimulation by NELL2, ROS1 activates the intracellular signaling pathway and triggers epididymal epithelial differentiation and subsequent sperm maturation. May activate several downstream signaling pathways related to cell differentiation, proliferation, growth and survival including the PI3 kinase-mTOR signaling pathway. Mediates the phosphorylation of PTPN11, an activator of this pathway. May also phosphorylate and activate the transcription factor STAT3 to control anchorage-independent cell growth. Mediates the phosphorylation and the activation of VAV3, a guanine nucleotide exchange factor regulating cell morphology. May activate other downstream signaling proteins including AKT1, MAPK1, MAPK3, IRS1, and PLCG2. This chain is Proto-oncogene tyrosine-protein kinase ROS (Ros1), found in Mus musculus (Mouse).